Reading from the N-terminus, the 102-residue chain is Small ribosomal subunit protein uS10 (102 aa).

Belongs to the universal ribosomal protein uS10 family. As to quaternary structure, part of the 30S ribosomal subunit.

Functionally, involved in the binding of tRNA to the ribosomes. This is Small ribosomal subunit protein uS10 from Desulforamulus reducens (strain ATCC BAA-1160 / DSM 100696 / MI-1) (Desulfotomaculum reducens).